The primary structure comprises 562 residues: Formate--tetrahydrofolate ligase (562 aa).

71 to 78 (TPAGEGKS) contacts ATP.

It belongs to the formate--tetrahydrofolate ligase family.

The catalysed reaction is (6S)-5,6,7,8-tetrahydrofolate + formate + ATP = (6R)-10-formyltetrahydrofolate + ADP + phosphate. The protein operates within one-carbon metabolism; tetrahydrofolate interconversion. The chain is Formate--tetrahydrofolate ligase from Bacillus anthracis (strain A0248).